The sequence spans 773 residues: E3 ubiquitin-protein ligase msl-2 (773 aa).

Cysteine 41, cysteine 44, cysteine 59, histidine 61, cysteine 64, cysteine 67, cysteine 78, and cysteine 84 together coordinate Zn(2+). The segment at 41–85 adopts an RING-type zinc-finger fold; it reads CVVCCQLLVDPYSPKGKRCQHNVCRLCLRGKKHLFPSCTQCEGCS. The stretch at 424 to 468 forms a coiled coil; sequence VQTELQDAESLQKDFEDAKAAAEEAKEKEKDLHAISAELQKEDSD. The segment at 460-525 is disordered; sequence AELQKEDSDE…EKVKPPKPKC (66 aa). One can recognise a CXC MSL2-type domain in the interval 520 to 571; it reads PPKPKCRCGISGSSNTLTTCRNSRCPCYKSYNSCAGCHCVCCKNPHKEDYVE. Zn(2+) contacts are provided by cysteine 525, cysteine 527, cysteine 539, cysteine 544, cysteine 546, cysteine 553, cysteine 556, cysteine 558, and cysteine 561. Positions 571–773 are C-terminal disordered region (CTD); sequence ESDEDDDLED…EEIMSGSDDL (203 aa). Residues 572–581 show a composition bias toward acidic residues; sequence SDEDDDLEDF. Residues 572 to 616 are disordered; the sequence is SDEDDDLEDFEMPKDVPEPMTQSEEPVVAEPRQEENSMAPPDSSA. The tract at residues 620 to 685 is clamp-binding domain (CBD); that stretch reads LVPLNNLQQS…SLPQYAYIMP (66 aa). Residues 650-708 form a pro/Bas region region; the sequence is QGSKPLDPVTVGFTIRVQLQHTDGFGSLPQYAYIMPTIDPPNPPAPSLSPPPPPAPDRE. Positions 687-704 are enriched in pro residues; it reads IDPPNPPAPSLSPPPPPA. Residues 687-773 form a disordered region; it reads IDPPNPPAPS…EEIMSGSDDL (87 aa). Residues 705 to 714 are compositionally biased toward basic and acidic residues; it reads PDREVIEPPA. Basic residues predominate over residues 715–726; it reads KKFRTSRTRRGR. Residues 742–759 are compositionally biased toward polar residues; the sequence is GSRSNSAAGDRSSATDNA.

It belongs to the MSL2 family. In terms of assembly, component of the male-specific lethal (MSL) histone acetyltransferase complex, composed of mof, mle, msl-1, msl-2 and msl-3 proteins, as well as roX1 and roX2 non-coding RNAs. When not associated with chromatin, the MSL complex associates with msl-2 mRNAs, possibly to regulate the amount of available MSL complex. Interacts with Clamp; promoting cooperative binding to DNA PionX sites and recruitment of the MSL complex to chromatin. Autoubiquitinated.

The protein localises to the nucleus. Its subcellular location is the chromosome. It catalyses the reaction S-ubiquitinyl-[E2 ubiquitin-conjugating enzyme]-L-cysteine + [acceptor protein]-L-lysine = [E2 ubiquitin-conjugating enzyme]-L-cysteine + N(6)-ubiquitinyl-[acceptor protein]-L-lysine.. It participates in protein modification; protein ubiquitination. Functionally, limiting component of the male-specific lethal (MSL) histone acetyltransferase complex, a multiprotein complex essential for elevating transcription of the single X chromosome in the male (X chromosome dosage compensation). The MSL complex specifically associates with the single X chromosome in males and mediates formation of H4K16ac, promoting a two-fold activation of X chromosome. Msl-2 is only produced in males, constituting the limiting component of the MSL complex. Within the MSL complex, msl-2 mediates the selective binding to the X chromosome and recruitment of the MSL complex via two different mechanisms. Recognizes DNA motifs that are enriched on X chromosome, named PionX sites, which are characterized by sequence features and distinct DNA conformation (base roll). Specific recognition of the X chromosome is also mediated by the formation of a gel-like state: msl-2 undergoes liquid-liquid phase separation upon binding to roX1 and roX2 non-coding RNAs, leading to nucleate the MSL complex on the X chromosome. Msl-2 is also required for translation and/or stability of msl-1 in males. Also acts as an E3 ubiquitin ligase: in complex with msl-1, mediates ubiquitination of histone H2B at 'Lys-34' (H2BK34Ub). Also catalyzes ubiquitination of msl-1, msl-3 and mof components of the MSL complex. The sequence is that of E3 ubiquitin-protein ligase msl-2 from Drosophila melanogaster (Fruit fly).